Here is a 242-residue protein sequence, read N- to C-terminus: Small ribosomal subunit protein uS2 (242 aa).

It belongs to the universal ribosomal protein uS2 family.

This Colwellia psychrerythraea (strain 34H / ATCC BAA-681) (Vibrio psychroerythus) protein is Small ribosomal subunit protein uS2.